The primary structure comprises 359 residues: S-adenosylmethionine-dependent nucleotide dehydratase RSAD2 (359 aa).

The segment at 43–67 (QTPARKISRPESRTSKQKEGSRAPF) is disordered. Positions 50–63 (SRPESRTSKQKEGS) are enriched in basic and acidic residues. The region spanning 67–287 (FTTPSSVNYH…LERHQSIQCL (221 aa)) is the Radical SAM core domain. [4Fe-4S] cluster-binding residues include Cys-81, Cys-85, and Cys-88.

Belongs to the radical SAM superfamily. RSAD2 family. It depends on [4Fe-4S] cluster as a cofactor.

It localises to the endoplasmic reticulum membrane. Functionally, interferon-inducible iron-sulfur (4FE-4S) cluster-binding antiviral protein which plays a major role in the cell antiviral state induced by type I and type II interferon. The chain is S-adenosylmethionine-dependent nucleotide dehydratase RSAD2 from Danio rerio (Zebrafish).